Consider the following 142-residue polypeptide: Metallothiol transferase FosB (142 aa).

The 116-residue stretch at 5-120 (SVNHICFSVS…DGHKIELHTG (116 aa)) folds into the VOC domain. The Mg(2+) site is built by His8, His67, and Glu116. The active-site Proton donor/acceptor is Glu116.

This sequence belongs to the fosfomycin resistance protein family. FosB subfamily. Homodimer. The cofactor is Mg(2+).

Its subcellular location is the cytoplasm. Metallothiol transferase which confers resistance to fosfomycin by catalyzing the addition of a thiol cofactor to fosfomycin. L-cysteine is probably the physiological thiol donor. The sequence is that of Metallothiol transferase FosB from Staphylococcus epidermidis (strain ATCC 12228 / FDA PCI 1200).